The sequence spans 321 residues: GDP-L-fucose synthase (321 aa).

14-20 (GGSGLVG) provides a ligand contact to NADP(+). The active-site Proton donor/acceptor is the Tyr-143. Residues Lys-147, 170-173 (PTNV), and His-186 contribute to the NADP(+) site. Residues Lys-194, Trp-208, Arg-215, and Asp-277 each contribute to the substrate site.

It belongs to the NAD(P)-dependent epimerase/dehydratase family. Fucose synthase subfamily. Homodimer.

The catalysed reaction is GDP-beta-L-fucose + NADP(+) = GDP-4-dehydro-alpha-D-rhamnose + NADPH + H(+). The protein operates within nucleotide-sugar biosynthesis; GDP-L-fucose biosynthesis via de novo pathway; GDP-L-fucose from GDP-alpha-D-mannose: step 2/2. Its function is as follows. Catalyzes the two-step NADP-dependent conversion of GDP-4-dehydro-6-deoxy-D-mannose to GDP-fucose, involving an epimerase and a reductase reaction. The chain is GDP-L-fucose synthase from Mus musculus (Mouse).